Reading from the N-terminus, the 96-residue chain is Ribonuclease P protein component 1 (96 aa).

It belongs to the eukaryotic/archaeal RNase P protein component 1 family. In terms of assembly, consists of a catalytic RNA component and at least 5 protein subunits.

Its subcellular location is the cytoplasm. The catalysed reaction is Endonucleolytic cleavage of RNA, removing 5'-extranucleotides from tRNA precursor.. Part of ribonuclease P, a protein complex that generates mature tRNA molecules by cleaving their 5'-ends. The protein is Ribonuclease P protein component 1 of Methanococcus maripaludis (strain DSM 14266 / JCM 13030 / NBRC 101832 / S2 / LL).